Here is a 214-residue protein sequence, read N- to C-terminus: Adenylate kinase (214 aa).

10 to 15 (GAGKGT) lines the ATP pocket. Positions 30-59 (STGDILRAAVKDMTPMGGKAKSFMDAGALV) are NMP. Residues T31, R36, 57-59 (ALV), 85-88 (GFPR), and Q92 each bind AMP. Residues 126 to 163 (GRRTCRNCGKGFHVSFDPPKSSGICDECSGELYQRDDD) form an LID region. ATP is bound at residue R127. Zn(2+) contacts are provided by C130, C133, C150, and C153. AMP is bound by residues R160 and R171. Residue G199 coordinates ATP.

This sequence belongs to the adenylate kinase family. Monomer.

It is found in the cytoplasm. The enzyme catalyses AMP + ATP = 2 ADP. It functions in the pathway purine metabolism; AMP biosynthesis via salvage pathway; AMP from ADP: step 1/1. Functionally, catalyzes the reversible transfer of the terminal phosphate group between ATP and AMP. Plays an important role in cellular energy homeostasis and in adenine nucleotide metabolism. The chain is Adenylate kinase from Geotalea daltonii (strain DSM 22248 / JCM 15807 / FRC-32) (Geobacter daltonii).